The sequence spans 163 residues: Phosphopantetheine adenylyltransferase (163 aa).

Substrate is bound at residue Thr10. Residues 10-11 and His18 contribute to the ATP site; that span reads TF. Residues Lys42, Leu74, and Arg88 each contribute to the substrate site. ATP contacts are provided by residues 89–91, Glu99, and 124–130; these read GLR and NSFISST.

It belongs to the bacterial CoaD family. Homohexamer. Mg(2+) is required as a cofactor.

Its subcellular location is the cytoplasm. It catalyses the reaction (R)-4'-phosphopantetheine + ATP + H(+) = 3'-dephospho-CoA + diphosphate. It functions in the pathway cofactor biosynthesis; coenzyme A biosynthesis; CoA from (R)-pantothenate: step 4/5. Its function is as follows. Reversibly transfers an adenylyl group from ATP to 4'-phosphopantetheine, yielding dephospho-CoA (dPCoA) and pyrophosphate. This chain is Phosphopantetheine adenylyltransferase, found in Shewanella sp. (strain W3-18-1).